A 313-amino-acid polypeptide reads, in one-letter code: Chemotaxis protein CheV2 (313 aa).

Residues 16–172 (EAQFLCFRLD…VEKMISDVFP (157 aa)) form the CheW-like domain. A Response regulatory domain is found at 193–313 (LILIAEDSLS…IHEMLKKTLS (121 aa)). D246 carries the post-translational modification 4-aspartylphosphate.

Post-translationally, phosphorylated; probably by transfer of CheAY phosphate group.

Functionally, plays a role in chemotaxis signal transduction system in order to colonize the host stomach. May act as a phosphate sink to control the flow of phosphate to CheAY. This Helicobacter pylori (strain ATCC 700392 / 26695) (Campylobacter pylori) protein is Chemotaxis protein CheV2.